The following is a 161-amino-acid chain: UPF0225 protein NTHI0386 (161 aa).

The protein belongs to the UPF0225 family.

This chain is UPF0225 protein NTHI0386, found in Haemophilus influenzae (strain 86-028NP).